We begin with the raw amino-acid sequence, 313 residues long: MLSITYSPAYTLVPTYECFNRCSYCNFRQEPRKDQWLTESVAKQRLESLAGRGIREILILAGEVHPQSSRRKAWFELIYNLGKIALDLGFYPHTNAGPLSRSEIARLKEVNFSLGLMLEQVSPRLLTTVHRQAPSKEPQLRLEQLRLAGELGIPFTTGLLLGIGETDQEVEESLMAIANVQQEYGHIQEVILQPHSPGQKQTDNISAYSPQKLVQVITLARAILPAEITLQIPPNLVPNFSDLLACLAAGVRDLGGIVPIDEVNPDYHHQSVNQLSQLLEENGYLLQPRFPVYPTYFSWLNCDLQQRLSVFIN.

The Radical SAM core domain maps to 4 to 235 (ITYSPAYTLV…AEITLQIPPN (232 aa)). 3 residues coordinate [4Fe-4S] cluster: Cys-18, Cys-22, and Cys-25.

The protein belongs to the radical SAM superfamily. CofG family. Consists of two subunits, CofG and CofH. [4Fe-4S] cluster is required as a cofactor.

The enzyme catalyses 5-amino-5-(4-hydroxybenzyl)-6-(D-ribitylimino)-5,6-dihydrouracil + S-adenosyl-L-methionine = 7,8-didemethyl-8-hydroxy-5-deazariboflavin + 5'-deoxyadenosine + L-methionine + NH4(+) + H(+). Its pathway is cofactor biosynthesis; coenzyme F0 biosynthesis. In terms of biological role, catalyzes the radical-mediated synthesis of 7,8-didemethyl-8-hydroxy-5-deazariboflavin from 5-amino-5-(4-hydroxybenzyl)-6-(D-ribitylimino)-5,6-dihydrouracil. The chain is 7,8-didemethyl-8-hydroxy-5-deazariboflavin synthase from Synechocystis sp. (strain ATCC 27184 / PCC 6803 / Kazusa).